Reading from the N-terminus, the 303-residue chain is Uridine diphosphate glucose pyrophosphatase NUDT22 (303 aa).

Substrate contacts are provided by F56, Y87, R139, A144, D151, H156, and E158. One can recognise a Nudix hydrolase domain in the interval 118–285 (ADPLGVGAAL…KGAIILYNRV (168 aa)). The tract at residues 148–168 (GLVDVPGGHPEPQALCPGGSP) is disordered. The Nudix box signature appears at 175–196 (GQLVVHELFSSVLQEICDEVNL). The Mg(2+) site is built by E189 and E193. S274 contacts substrate.

This sequence belongs to the Nudix hydrolase family. Mg(2+) serves as cofactor.

It carries out the reaction UDP-sugar + H2O = UMP + alpha-D-aldose 1-phosphate.. Hydrolyzes UDP-glucose to glucose 1-phosphate and UMP and UDP-galactose to galactose 1-phosphate and UMP. Preferred substrate is UDP-glucose. The sequence is that of Uridine diphosphate glucose pyrophosphatase NUDT22 (NUDT22) from Homo sapiens (Human).